We begin with the raw amino-acid sequence, 535 residues long: BAR/IMD domain-containing adapter protein 2 (535 aa).

An IMD domain is found at 1–250 (MSLSRSEEMH…VQLMQQMANS (250 aa)). Positions 88–153 (NQLEETLKSF…LRKKSQGSKN (66 aa)) form a coiled coil. A phosphoserine mark is found at Ser-262, Ser-324, Ser-326, and Ser-337. Residues 299 to 370 (VMNGVAGPDS…TLPRSSSMAA (72 aa)) form a disordered region. Residues 321–335 (QPKSLSPPQSQSKLS) show a composition bias toward low complexity. Phosphothreonine is present on Thr-341. Ser-347 is subject to Phosphoserine. The span at 349-368 (TPKNSYATTENKTLPRSSSM) shows a compositional bias: polar residues. Position 361 is a phosphothreonine (Thr-361). 4 positions are modified to phosphoserine: Ser-367, Ser-385, Ser-396, and Ser-455. An SH3 domain is found at 375 to 438 (NGRMRVKAIF…PFSYTRVLDS (64 aa)). The disordered stretch occupies residues 445–477 (HMSLQQGKSSSTGNLLDKDDLALPPPDYGTSSR). The segment covering 447 to 458 (SLQQGKSSSTGN) has biased composition (polar residues).

As to quaternary structure, homodimer. Interacts with CDC42 and RAC1 that have been activated by GTP binding. Binds DIAPH1. Interacts with ATN1, ADGRB1, SHANK1, SHANK2, SHANK3, TIAM1, WASF1 and WASF2. Interacts with ENAH after recruitment of CDC42. Interacts with EPS8. In terms of processing, phosphorylated on tyrosine residues by INSR in response to insulin treatment. As to expression, detected in liver, brain, olfactory bulb, brain cortex, caudate putamen, hypothalamus and cerebellum.

It is found in the cytoplasm. The protein localises to the membrane. The protein resides in the cell projection. Its subcellular location is the filopodium. It localises to the ruffle. It is found in the cytoskeleton. Functionally, adapter protein that links membrane-bound small G-proteins to cytoplasmic effector proteins. Necessary for CDC42-mediated reorganization of the actin cytoskeleton and for RAC1-mediated membrane ruffling. Involved in the regulation of the actin cytoskeleton by WASF family members and the Arp2/3 complex. Plays a role in neurite growth. Acts syngeristically with ENAH to promote filipodia formation. Plays a role in the reorganization of the actin cytoskeleton in response to bacterial infection. Participates in actin bundling when associated with EPS8, promoting filopodial protrusions. This is BAR/IMD domain-containing adapter protein 2 (Baiap2) from Mus musculus (Mouse).